Reading from the N-terminus, the 219-residue chain is Ion-translocating oxidoreductase complex subunit G (219 aa).

A helical transmembrane segment spans residues 25–45 (GLLLGLFSLVSALMLALASDA). T187 carries the post-translational modification FMN phosphoryl threonine.

The protein belongs to the RnfG family. In terms of assembly, the complex is composed of six subunits: RnfA, RnfB, RnfC, RnfD, RnfE and RnfG. The cofactor is FMN.

Its subcellular location is the cellular chromatophore membrane. Functionally, part of a membrane-bound complex that couples electron transfer with translocation of ions across the membrane. In Cereibacter sphaeroides (strain ATCC 17023 / DSM 158 / JCM 6121 / CCUG 31486 / LMG 2827 / NBRC 12203 / NCIMB 8253 / ATH 2.4.1.) (Rhodobacter sphaeroides), this protein is Ion-translocating oxidoreductase complex subunit G.